The sequence spans 419 residues: Phosphoglycerate kinase (419 aa).

Residues D42–N44, R58, H81–R84, R135, and R168 contribute to the substrate site. ATP is bound by residues K219, E341, and G367 to T370.

Belongs to the phosphoglycerate kinase family. In terms of assembly, monomer.

Its subcellular location is the cytoplasm. It carries out the reaction (2R)-3-phosphoglycerate + ATP = (2R)-3-phospho-glyceroyl phosphate + ADP. It functions in the pathway carbohydrate degradation; glycolysis; pyruvate from D-glyceraldehyde 3-phosphate: step 2/5. The polypeptide is Phosphoglycerate kinase (Ralstonia nicotianae (strain ATCC BAA-1114 / GMI1000) (Ralstonia solanacearum)).